Here is a 550-residue protein sequence, read N- to C-terminus: Hydroxylamine reductase (550 aa).

Residues Cys-5, Cys-8, Cys-17, and Cys-23 each coordinate [4Fe-4S] cluster. The hybrid [4Fe-2O-2S] cluster site is built by His-250, Glu-274, Cys-319, Cys-405, Cys-433, Cys-458, Glu-492, and Lys-494. Residue Cys-405 is modified to Cysteine persulfide.

It belongs to the HCP family. Requires [4Fe-4S] cluster as cofactor. Hybrid [4Fe-2O-2S] cluster is required as a cofactor.

Its subcellular location is the cytoplasm. The catalysed reaction is A + NH4(+) + H2O = hydroxylamine + AH2 + H(+). Functionally, catalyzes the reduction of hydroxylamine to form NH(3) and H(2)O. The polypeptide is Hydroxylamine reductase (Geobacter sulfurreducens (strain ATCC 51573 / DSM 12127 / PCA)).